Reading from the N-terminus, the 780-residue chain is Cyclin-F (780 aa).

The Nuclear localization signal 1 motif lies at 20-28; it reads KRRIKRRPR. Positions 29-76 constitute an F-box domain; it reads NLTILSLPEDVLFHILKWLSVGDILAVRAVHSHLKYLVDNHASVWASA. Residues 288-405 enclose the Cyclin N-terminal domain; sequence QASQAVNKQQ…EIISALEGKI (118 aa). 3 consecutive short sequence motifs (d box) follow at residues 310–313, 343–346, and 349–352; these read RYIL, RRRL, and RYKL. Disordered regions lie at residues 544–594, 651–733, and 745–780; these read QESP…AELS, QESS…STKP, and CRPPNPPESGAHQQPVKRQNLSVHSDEDTNLGFLKL. The short motif at 568-574 is the Nuclear localization signal 2 element; the sequence is RRSKRKR. The interval 582–761 is PEST; it reads RGSFVTTPTA…ESGAHQQPVK (180 aa). The segment covering 585 to 594 has biased composition (polar residues); sequence FVTTPTAELS. Composition is skewed to low complexity over residues 695–708 and 719–731; these read SGYSSVSSSSPISS and STSVLSVGSHSST. Residues 762–765 carry the D box 4 motif; the sequence is RQNL.

Belongs to the cyclin family. Cyclin AB subfamily. As to quaternary structure, component of the SCF(CCNF) complex consisting of CUL1, RBX1, SKP1 and CCNF. Interacts with SKP1. Interacts with CUL1. Interacts with CCNB1; interaction is required for nuclear localization of CCNB1. Interacts with CCP110; this interaction leads to CCP110 ubiquitination and degradation via the proteasome pathway. Interacts (via the Cyclin N-terminal domain) with MYBL2/BMYB. Interacts with FZR1/CDH1 (via N-terminus). Interacts with RRM2 (via Cy motif and when phosphorylated at 'Thr-33'); the interaction occurs exclusively in G2 and early M. Interacts with CDC6 (via Cy motif); the interaction takes place during G2 and M phase. Post-translationally, degraded when the spindle assembly checkpoint is activated during the G2-M transition. Degradation is not dependent on the proteasome or ubiquitin and depends on the C-terminal PEST sequence. Phosphorylated just before cells enter into mitosis. In terms of processing, ubiquitinated by the anaphase-promoting complex (APC/C); leading to its degradation by the proteasome.

The protein localises to the nucleus. The protein resides in the cytoplasm. It is found in the perinuclear region. Its subcellular location is the cytoskeleton. It localises to the microtubule organizing center. The protein localises to the centrosome. The protein resides in the centriole. In terms of biological role, substrate recognition component of a SCF (SKP1-CUL1-F-box protein) E3 ubiquitin-protein ligase complex which mediates the ubiquitination and subsequent proteasomal degradation of target proteins. The SCF(CCNF) E3 ubiquitin-protein ligase complex is an integral component of the ubiquitin proteasome system (UPS) and links proteasome degradation to the cell cycle. Mediates the substrate recognition and the proteasomal degradation of various target proteins involved in the regulation of cell cycle progression and in the maintenance of genome stability. Mediates the ubiquitination and subsequent proteasomal degradation of CP110 during G2 phase, thereby acting as an inhibitor of centrosome reduplication. In G2, mediates the ubiquitination and proteasomal degradation of CDC6, thereby suppressing DNA re-replication and preventing genome instability. Involved in the ubiquitination and degradation of the substrate adapter CDH1 of the anaphase-promoting complex (APC/C), thereby acting as an antagonist of APC/C in regulating G1 progression and S phase entry. May play a role in the G2 cell cycle checkpoint control after DNA damage, possibly by promoting the ubiquitination of MYBL2/BMYB. The sequence is that of Cyclin-F (Ccnf) from Rattus norvegicus (Rat).